The chain runs to 133 residues: p53 and DNA damage-regulated protein 1 (133 aa).

Belongs to the prefoldin subunit beta family. In terms of assembly, component of the PAQosome complex which is responsible for the biogenesis of several protein complexes and which consists of R2TP complex members RUVBL1, RUVBL2, RPAP3 and PIH1D1, URI complex members PFDN2, PFDN6, PDRG1, UXT and URI1 as well as ASDURF, POLR2E and DNAAF10/WDR92. In terms of tissue distribution, predominantly expressed in normal testis and exhibits reduced but detectable expression in other organs.

Its subcellular location is the cytoplasm. Its function is as follows. May play a role in chaperone-mediated protein folding. This chain is p53 and DNA damage-regulated protein 1 (PDRG1), found in Homo sapiens (Human).